The sequence spans 171 residues: Ribosome maturation factor RimM (171 aa).

Residues 97–169 form the PRC barrel domain; that stretch reads DGEFYYHEII…RVDVDIMEGL (73 aa).

Belongs to the RimM family. In terms of assembly, binds ribosomal protein uS19.

It localises to the cytoplasm. Its function is as follows. An accessory protein needed during the final step in the assembly of 30S ribosomal subunit, possibly for assembly of the head region. Essential for efficient processing of 16S rRNA. May be needed both before and after RbfA during the maturation of 16S rRNA. It has affinity for free ribosomal 30S subunits but not for 70S ribosomes. This chain is Ribosome maturation factor RimM, found in Lactococcus lactis subsp. cremoris (strain MG1363).